Consider the following 134-residue polypeptide: D-xylulose reductase (134 aa).

Positions 31–115 are disordered; that stretch reads PATTTXYKXQ…XXQXDKIGRY (85 aa). The span at 50–59 shows a compositional bias: basic and acidic residues; sequence QTHEGTHQDV.

Belongs to the zinc-containing alcohol dehydrogenase family.

The catalysed reaction is xylitol + NAD(+) = D-xylulose + NADH + H(+). With respect to regulation, activated by calcium and inhibited by zinc. This Sus scrofa (Pig) protein is D-xylulose reductase.